The chain runs to 141 residues: Large ribosomal subunit protein uL16c (141 aa).

The span at 1 to 17 (MLSPKRTKYRKPHRGNR) shows a compositional bias: basic residues. Residues 1–21 (MLSPKRTKYRKPHRGNRKGQA) form a disordered region.

This sequence belongs to the universal ribosomal protein uL16 family. In terms of assembly, part of the 50S ribosomal subunit.

The protein localises to the plastid. Its subcellular location is the chloroplast. The chain is Large ribosomal subunit protein uL16c from Ostreococcus tauri.